A 298-amino-acid polypeptide reads, in one-letter code: Cyclic dof factor 1 (298 aa).

The tract at residues 27–46 (EEEEKNQNKTLTDQSEKDKT) is disordered. The Dof-type zinc finger occupies 54-108 (LPCPRCNSMETKFCYYNNYNVNQPRHFCKACQRYWTSGGTMRSVPIGAGRRKNKN). Zn(2+) contacts are provided by Cys56, Cys59, Cys81, and Cys84. The tract at residues 200-231 (SSSPTSTLGKHSRDEDETVKQKQRNGSVLVPK) is disordered. Residues 210–219 (HSRDEDETVK) show a composition bias toward basic and acidic residues.

In terms of assembly, interacts with ADO2 (via kelch repeats), ADO3 (via kelch repeats) and GI (via N-terminus). Ubiquitinated. Expressed in the vascular tissues of cotyledons, leaves and hypocotyls and in stomata. Not detected in roots.

It localises to the nucleus. In terms of biological role, transcription factor that binds specifically to a 5'-AA[AG]G-3' consensus core sequence. A flanking TGT sequence contributes to the specificity of binding. Regulates a photoperiodic flowering response. Transcriptional repressor of 'CONSTANS' expression. The DNA-binding ability is not modulated by 'GIGANTEA' but the stability of CDF1 is controlled by the proteasome-dependent pathway. Ubiquitinated by the SCF(ADO3) E3 ubiquitin ligase complex. Binds to the FT promoter in the morning. This chain is Cyclic dof factor 1 (CDF1), found in Arabidopsis thaliana (Mouse-ear cress).